Consider the following 603-residue polypeptide: Threonine--tRNA ligase (603 aa).

Positions 209-500 are catalytic; sequence DHRKLGNEMK…LIEHCAGELP (292 aa). The Zn(2+) site is built by Cys-301, His-352, and His-477.

It belongs to the class-II aminoacyl-tRNA synthetase family. As to quaternary structure, homodimer. Requires Zn(2+) as cofactor.

It localises to the cytoplasm. The catalysed reaction is tRNA(Thr) + L-threonine + ATP = L-threonyl-tRNA(Thr) + AMP + diphosphate + H(+). Catalyzes the attachment of threonine to tRNA(Thr) in a two-step reaction: L-threonine is first activated by ATP to form Thr-AMP and then transferred to the acceptor end of tRNA(Thr). Also edits incorrectly charged L-seryl-tRNA(Thr). This is Threonine--tRNA ligase from Campylobacter lari (strain RM2100 / D67 / ATCC BAA-1060).